A 1634-amino-acid chain; its full sequence is Leucine-rich repeat-containing protein 37A3 (1634 aa).

Positions 1-35 (MTSAQCPALACVMSPLRFWGPWPLLMWQLLWLLVK) are cleaved as a signal peptide. At 36–1581 (EAQPLEWVKD…ELPGYGYTKK (1546 aa)) the chain is on the extracellular side. 5 disordered regions span residues 53–104 (PLGP…ESTE), 129–154 (SQQD…KKDP), 172–531 (TPQS…VVVA), 619–642 (PEPT…KHPE), and 758–777 (EPTT…APRP). An LRR 1 repeat occupies 137–160 (LSPQERLPVSPKKLKKDPAQRWSL). Composition is skewed to polar residues over residues 172–189 (TPQS…STDT) and 223–237 (ETQN…QSSS). LRR repeat units lie at residues 230 to 253 (LEDI…LEEE) and 267 to 290 (ESSM…EDQA). Low complexity predominate over residues 238–249 (LQQEAPAQLPQL). Residue N296 is glycosylated (N-linked (GlcNAc...) asparagine). Positions 307–326 (TITSEPTNETESSQAQQETP) are enriched in polar residues. A compositionally biased stretch (low complexity) spans 358 to 368 (SEQQQPVQPSE). The segment covering 433 to 446 (LVHQEATTRLSGSG) has biased composition (polar residues). The span at 482–493 (SPEPINNENPSP) shows a compositional bias: low complexity. Residues 760–770 (TTETGHSTALE) show a composition bias toward polar residues. 6 LRR repeats span residues 864 to 887 (NGTF…VWKA), 888 to 911 (YSWT…SFEG), 912 to 935 (LLSL…TFEP), 937 to 959 (PFLK…TFQA), 963 to 987 (MQFL…LFKL), and 1002 to 1027 (LTTL…MACC). An N-linked (GlcNAc...) asparagine glycan is attached at N1079. 2 LRR repeats span residues 1124–1146 (LPYF…KLPT) and 1151–1176 (LAKI…SIQK). 2 stretches are compositionally biased toward basic and acidic residues: residues 1181-1191 (EVGRQSIRREQ) and 1201-1216 (AEEK…ELKQ). 2 disordered regions span residues 1181–1227 (EVGR…EKLA) and 1306–1329 (RFHK…KVRK). The LRR 12 repeat unit spans residues 1359–1384 (FSSLRDLSPQENPFLEVSAPSEHFIE). A helical transmembrane segment spans residues 1582-1602 (LILALIVTGILTILIILLCLI). The Cytoplasmic portion of the chain corresponds to 1603–1634 (EICCHRRSLQEDEEGFSRDSEAPTEEESEALP). Positions 1614 to 1634 (DEEGFSRDSEAPTEEESEALP) are disordered. Acidic residues predominate over residues 1624–1634 (APTEEESEALP).

It belongs to the LRRC37A family.

The protein localises to the membrane. This Homo sapiens (Human) protein is Leucine-rich repeat-containing protein 37A3 (LRRC37A3).